Here is a 360-residue protein sequence, read N- to C-terminus: Photosystem II protein D1 1 (360 aa).

3 consecutive transmembrane segments (helical) span residues 29–46, 118–133, and 142–156; these read YVGW…TAAI, HFLI…QWEL, and WIPV…AATA. H118 contacts chlorophyll a. Y126 contacts pheophytin a. 2 residues coordinate [CaMn4O5] cluster: D170 and E189. The chain crosses the membrane as a helical span at residues 197 to 218; it reads FHMIGVAGVFGGALFSAMHGSL. Position 198 (H198) interacts with chlorophyll a. Residues H215 and 264–265 each bind a quinone; that span reads SF. Position 215 (H215) interacts with Fe cation. H272 serves as a coordination point for Fe cation. A helical transmembrane segment spans residues 274 to 288; that stretch reads FLAAWPVIGIWFAAL. [CaMn4O5] cluster is bound by residues H332, E333, D342, and A344. Positions 345-360 are excised as a propeptide; the sequence is SGEVQPIALAAPAIAS.

The protein belongs to the reaction center PufL/M/PsbA/D family. In terms of assembly, PSII is composed of 1 copy each of membrane proteins PsbA, PsbB, PsbC, PsbD, PsbE, PsbF, PsbH, PsbI, PsbJ, PsbK, PsbL, PsbM, PsbT, PsbX, PsbY, PsbZ, Psb30/Ycf12, peripheral proteins PsbO, CyanoQ (PsbQ), PsbU, PsbV and a large number of cofactors. It forms dimeric complexes. The D1/D2 heterodimer binds P680, chlorophylls that are the primary electron donor of PSII, and subsequent electron acceptors. It shares a non-heme iron and each subunit binds pheophytin, quinone, additional chlorophylls, carotenoids and lipids. D1 provides most of the ligands for the Mn4-Ca-O5 cluster of the oxygen-evolving complex (OEC). There is also a Cl(-1) ion associated with D1 and D2, which is required for oxygen evolution. The PSII complex binds additional chlorophylls, carotenoids and specific lipids. serves as cofactor. Tyr-161 forms a radical intermediate that is referred to as redox-active TyrZ, YZ or Y-Z. In terms of processing, C-terminally processed by CtpA; processing is essential to allow assembly of the oxygen-evolving complex and thus photosynthetic growth.

It localises to the cellular thylakoid membrane. It catalyses the reaction 2 a plastoquinone + 4 hnu + 2 H2O = 2 a plastoquinol + O2. Photosystem II (PSII) is a light-driven water:plastoquinone oxidoreductase that uses light energy to abstract electrons from H(2)O, generating O(2) and a proton gradient subsequently used for ATP formation. It consists of a core antenna complex that captures photons, and an electron transfer chain that converts photonic excitation into a charge separation. The D1/D2 (PsbA/PsbD) reaction center heterodimer binds P680, the primary electron donor of PSII as well as several subsequent electron acceptors. The sequence is that of Photosystem II protein D1 1 from Trichormus variabilis (strain ATCC 29413 / PCC 7937) (Anabaena variabilis).